Reading from the N-terminus, the 240-residue chain is LexA repressor (240 aa).

Residues 26–46 constitute a DNA-binding region (H-T-H motif); sequence FDEMKDALDLKSKSGIHRLIT. Residues serine 161 and lysine 199 each act as for autocatalytic cleavage activity in the active site.

The protein belongs to the peptidase S24 family. As to quaternary structure, homodimer.

It carries out the reaction Hydrolysis of Ala-|-Gly bond in repressor LexA.. Functionally, represses a number of genes involved in the response to DNA damage (SOS response), including recA and lexA. In the presence of single-stranded DNA, RecA interacts with LexA causing an autocatalytic cleavage which disrupts the DNA-binding part of LexA, leading to derepression of the SOS regulon and eventually DNA repair. This Methylobacterium nodulans (strain LMG 21967 / CNCM I-2342 / ORS 2060) protein is LexA repressor.